The chain runs to 268 residues: MSNKVHLGHTARKRFGQNFLTDQGVISSIVGAIAPDNDHVMVEIGPGLGALTEPVADMIDNLTVVELDRDLVKRLQYHPVLKDKLTIHQGDALQFDFGQLQQPGKKMKVFGNLPYNISTPLMFHLFEFAEQIETMHFMLQKEVVLRLSASPGTKAYGRLTVMAQYYCQVVPVLEVPPTSFTPAPKVDSAVIRLLPFEVKPWPCKNVDVLRHLVTTAFNMRRKTLRNNLKTLLSDEDFAELQIDASLRPEQISVPQYVAMANMLCDKKD.

Asparagine 18, leucine 20, glycine 45, glutamate 66, aspartate 91, and asparagine 112 together coordinate S-adenosyl-L-methionine.

Belongs to the class I-like SAM-binding methyltransferase superfamily. rRNA adenine N(6)-methyltransferase family. RsmA subfamily.

The protein localises to the cytoplasm. The catalysed reaction is adenosine(1518)/adenosine(1519) in 16S rRNA + 4 S-adenosyl-L-methionine = N(6)-dimethyladenosine(1518)/N(6)-dimethyladenosine(1519) in 16S rRNA + 4 S-adenosyl-L-homocysteine + 4 H(+). Its function is as follows. Specifically dimethylates two adjacent adenosines (A1518 and A1519) in the loop of a conserved hairpin near the 3'-end of 16S rRNA in the 30S particle. May play a critical role in biogenesis of 30S subunits. The polypeptide is Ribosomal RNA small subunit methyltransferase A (Shewanella frigidimarina (strain NCIMB 400)).